The sequence spans 577 residues: Aspartate--tRNA(Asp) ligase (577 aa).

Glu172 serves as a coordination point for L-aspartate. Residues 196-199 form an aspartate region; the sequence is QLFK. Arg218 lines the L-aspartate pocket. ATP-binding positions include 218-220 and Gln227; that span reads RDE. Residue His438 participates in L-aspartate binding. ATP is bound at residue Glu473. Arg480 lines the L-aspartate pocket. Position 525–528 (525–528) interacts with ATP; the sequence is GFDR.

This sequence belongs to the class-II aminoacyl-tRNA synthetase family. Type 1 subfamily. Homodimer.

The protein localises to the cytoplasm. The catalysed reaction is tRNA(Asp) + L-aspartate + ATP = L-aspartyl-tRNA(Asp) + AMP + diphosphate. Its function is as follows. Catalyzes the attachment of L-aspartate to tRNA(Asp) in a two-step reaction: L-aspartate is first activated by ATP to form Asp-AMP and then transferred to the acceptor end of tRNA(Asp). Is specific for tRNA(Asp) since it cannot aspartylate tRNA(Asn). The protein is Aspartate--tRNA(Asp) ligase (aspS1) of Deinococcus radiodurans (strain ATCC 13939 / DSM 20539 / JCM 16871 / CCUG 27074 / LMG 4051 / NBRC 15346 / NCIMB 9279 / VKM B-1422 / R1).